The following is a 503-amino-acid chain: Ribose import ATP-binding protein RbsA (503 aa).

ABC transporter domains lie at 10–246 and 256–500; these read LEVR…VGRD and VEPG…TGSE. 42 to 49 provides a ligand contact to ATP; the sequence is GENGAGKS.

Belongs to the ABC transporter superfamily. Ribose importer (TC 3.A.1.2.1) family. As to quaternary structure, the complex is composed of an ATP-binding protein (RbsA), two transmembrane proteins (RbsC) and a solute-binding protein (RbsB).

The protein resides in the cell membrane. The catalysed reaction is D-ribose(out) + ATP + H2O = D-ribose(in) + ADP + phosphate + H(+). Part of the ABC transporter complex RbsABC involved in ribose import. Responsible for energy coupling to the transport system. The polypeptide is Ribose import ATP-binding protein RbsA (Rhodococcus jostii (strain RHA1)).